We begin with the raw amino-acid sequence, 117 residues long: Circadian clock oscillator protein KaiB (117 aa).

It belongs to the KaiB family. As to quaternary structure, may undergo a major conformational rearrangment; in the free state forms homooligomers. When bound to KaiC switches to a monomeric thioredoxin-fold (KaiB(fs)). The active oscillator complex is probably KaiC(6):KaiB(6).

Functionally, component of the KaiBC clock protein complex, which constitutes the main circadian regulator in cyanobacteria; it may modify the ATPase activity of KaiC. In terms of biological role, may be a metamorphic protein which reversibly switches between an inactive tetrameric fold and a rare, thioredoxin-like monomeric fold (KaiB(fs)). KaiB(fs) binds phospho-KaiC, and perhaps clock output effectors. The chain is Circadian clock oscillator protein KaiB from Prochlorococcus marinus (strain SARG / CCMP1375 / SS120).